Here is a 303-residue protein sequence, read N- to C-terminus: UDP-3-O-acyl-N-acetylglucosamine deacetylase (303 aa).

H78, H237, and D241 together coordinate Zn(2+). H264 functions as the Proton donor in the catalytic mechanism.

This sequence belongs to the LpxC family. Zn(2+) serves as cofactor.

It carries out the reaction a UDP-3-O-[(3R)-3-hydroxyacyl]-N-acetyl-alpha-D-glucosamine + H2O = a UDP-3-O-[(3R)-3-hydroxyacyl]-alpha-D-glucosamine + acetate. It participates in glycolipid biosynthesis; lipid IV(A) biosynthesis; lipid IV(A) from (3R)-3-hydroxytetradecanoyl-[acyl-carrier-protein] and UDP-N-acetyl-alpha-D-glucosamine: step 2/6. In terms of biological role, catalyzes the hydrolysis of UDP-3-O-myristoyl-N-acetylglucosamine to form UDP-3-O-myristoylglucosamine and acetate, the committed step in lipid A biosynthesis. In Pseudomonas paraeruginosa (strain DSM 24068 / PA7) (Pseudomonas aeruginosa (strain PA7)), this protein is UDP-3-O-acyl-N-acetylglucosamine deacetylase.